The primary structure comprises 241 residues: 3-oxoacyl-[acyl-carrier-protein] reductase FabG (241 aa).

NADP(+) is bound by residues 13–16 (GASG), Ser38, 57–58 (EV), and Asn83. Ser135 provides a ligand contact to substrate. Tyr148 functions as the Proton acceptor in the catalytic mechanism. NADP(+) contacts are provided by residues 148-152 (YCASK) and Ile181.

The protein belongs to the short-chain dehydrogenases/reductases (SDR) family. As to quaternary structure, homotetramer.

It catalyses the reaction a (3R)-hydroxyacyl-[ACP] + NADP(+) = a 3-oxoacyl-[ACP] + NADPH + H(+). The protein operates within lipid metabolism; fatty acid biosynthesis. Functionally, catalyzes the NADPH-dependent reduction of beta-ketoacyl-ACP substrates to beta-hydroxyacyl-ACP products, the first reductive step in the elongation cycle of fatty acid biosynthesis. In Rickettsia conorii (strain ATCC VR-613 / Malish 7), this protein is 3-oxoacyl-[acyl-carrier-protein] reductase FabG (fabG).